A 208-amino-acid chain; its full sequence is Large ribosomal subunit protein uL3 (208 aa).

The disordered stretch occupies residues F117–P149.

Belongs to the universal ribosomal protein uL3 family. As to quaternary structure, part of the 50S ribosomal subunit. Forms a cluster with proteins L14 and L19.

Its function is as follows. One of the primary rRNA binding proteins, it binds directly near the 3'-end of the 23S rRNA, where it nucleates assembly of the 50S subunit. The sequence is that of Large ribosomal subunit protein uL3 from Streptococcus equi subsp. equi (strain 4047).